A 293-amino-acid polypeptide reads, in one-letter code: MNEQELKQMIEGILTEMSGGKTTDTVAAVPTKSVVETVVTEGSIPDITEVDIKKQLLVPEPADREGYLKMKQMTPARLGLWRAGPRYKTETILRFRADHAVAQDSVFSYVSEDLVKEMNFIPVNTKCQDKDEYLTRPDLGREFDDEMVEVIRANTTKNAKLQIVVGDGLSSAAIEANIKDILPSIKQGLKMYNLDFDNIIFVKHCRVPSMDKIGEITGADVVCLLVGERPGLVTAESMSAYIAYKPTVGMPEARRTVISNIHSGGTPPVEAGAYIAELIHNMLEKKCSGIDLK.

2 residues coordinate adenosylcob(III)alamin: Val-207 and Glu-228.

It belongs to the EutC family. In terms of assembly, the basic unit is a heterodimer which dimerizes to form tetramers. The heterotetramers trimerize; 6 large subunits form a core ring with 6 small subunits projecting outwards. Adenosylcob(III)alamin is required as a cofactor.

It localises to the bacterial microcompartment. It carries out the reaction ethanolamine = acetaldehyde + NH4(+). It functions in the pathway amine and polyamine degradation; ethanolamine degradation. Catalyzes the deamination of various vicinal amino-alcohols to oxo compounds. Allows this organism to utilize ethanolamine as the sole source of nitrogen and carbon in the presence of external vitamin B12. The sequence is that of Ethanolamine ammonia-lyase small subunit from Listeria monocytogenes serovar 1/2a (strain ATCC BAA-679 / EGD-e).